Reading from the N-terminus, the 151-residue chain is Large ribosomal subunit protein uL13 (151 aa).

The disordered stretch occupies residues 126-151 (YPGPNHPHQAQKPEELTLNTIPNGDK). The segment covering 142-151 (TLNTIPNGDK) has biased composition (polar residues).

It belongs to the universal ribosomal protein uL13 family. Part of the 50S ribosomal subunit.

Functionally, this protein is one of the early assembly proteins of the 50S ribosomal subunit, although it is not seen to bind rRNA by itself. It is important during the early stages of 50S assembly. This is Large ribosomal subunit protein uL13 from Crocosphaera subtropica (strain ATCC 51142 / BH68) (Cyanothece sp. (strain ATCC 51142)).